A 42-amino-acid polypeptide reads, in one-letter code: Large ribosomal subunit protein bL36 (42 aa).

Belongs to the bacterial ribosomal protein bL36 family.

The protein is Large ribosomal subunit protein bL36 of Ehrlichia canis (strain Jake).